Here is a 467-residue protein sequence, read N- to C-terminus: Argininosuccinate lyase (467 aa).

2-(N(omega)-L-arginino)succinate is bound by residues Ser-27, Asn-114, and Thr-159. His-160 acts as the Proton acceptor in catalysis. Ser-281 functions as the Proton donor in the catalytic mechanism. Asn-289, Tyr-321, Gln-326, and Lys-329 together coordinate 2-(N(omega)-L-arginino)succinate.

This sequence belongs to the lyase 1 family. Argininosuccinate lyase subfamily. In terms of assembly, homotetramer.

It carries out the reaction 2-(N(omega)-L-arginino)succinate = fumarate + L-arginine. The protein operates within amino-acid biosynthesis; L-arginine biosynthesis; L-arginine from L-ornithine and carbamoyl phosphate: step 3/3. Its pathway is nitrogen metabolism; urea cycle; L-arginine and fumarate from (N(omega)-L-arginino)succinate: step 1/1. This is Argininosuccinate lyase (ASL) from Aquarana catesbeiana (American bullfrog).